The sequence spans 295 residues: Bifunctional protein FolD (295 aa).

NADP(+) contacts are provided by residues 166 to 168, Ser-191, and Ile-232; that span reads GRS.

The protein belongs to the tetrahydrofolate dehydrogenase/cyclohydrolase family. As to quaternary structure, homodimer.

It catalyses the reaction (6R)-5,10-methylene-5,6,7,8-tetrahydrofolate + NADP(+) = (6R)-5,10-methenyltetrahydrofolate + NADPH. It carries out the reaction (6R)-5,10-methenyltetrahydrofolate + H2O = (6R)-10-formyltetrahydrofolate + H(+). It participates in one-carbon metabolism; tetrahydrofolate interconversion. Functionally, catalyzes the oxidation of 5,10-methylenetetrahydrofolate to 5,10-methenyltetrahydrofolate and then the hydrolysis of 5,10-methenyltetrahydrofolate to 10-formyltetrahydrofolate. The sequence is that of Bifunctional protein FolD from Rhodopseudomonas palustris (strain BisA53).